The chain runs to 123 residues: ATP synthase epsilon chain (123 aa).

The protein belongs to the ATPase epsilon chain family. As to quaternary structure, F-type ATPases have 2 components, CF(1) - the catalytic core - and CF(0) - the membrane proton channel. CF(1) has five subunits: alpha(3), beta(3), gamma(1), delta(1), epsilon(1). CF(0) has three main subunits: a, b and c.

It localises to the cell inner membrane. Produces ATP from ADP in the presence of a proton gradient across the membrane. The polypeptide is ATP synthase epsilon chain (Helicobacter pylori (strain G27)).